The sequence spans 407 residues: uncharacterized protein (407 aa).

Positions 145 to 231 (EANRFGRSNS…DPLTSITSDT (87 aa)) are disordered. The span at 158–175 (SNSRSKSSRSRSNNRSKS) shows a compositional bias: basic residues. A compositionally biased stretch (low complexity) spans 176-196 (SRSSSTQSKSNNRSNSRSNSK). In terms of domain architecture, N-acetyltransferase spans 271–407 (IVFETLDQND…NHKIHMEKDI (137 aa)).

The protein localises to the virion. This is an uncharacterized protein from Acanthamoeba polyphaga (Amoeba).